Reading from the N-terminus, the 1496-residue chain is DNA-directed RNA polymerase subunit beta' (1496 aa).

Residues C70, C72, C85, and C88 each contribute to the Zn(2+) site. Mg(2+)-binding residues include D461, D463, and D465. 4 residues coordinate Zn(2+): C908, C982, C989, and C992. Residues 1467 to 1496 (DKDMQVEGESEVPAIPPVAEGSAPEAPPAE) form a disordered region.

It belongs to the RNA polymerase beta' chain family. As to quaternary structure, the RNAP catalytic core consists of 2 alpha, 1 beta, 1 beta' and 1 omega subunit. When a sigma factor is associated with the core the holoenzyme is formed, which can initiate transcription. The cofactor is Mg(2+). Zn(2+) is required as a cofactor.

The enzyme catalyses RNA(n) + a ribonucleoside 5'-triphosphate = RNA(n+1) + diphosphate. Its function is as follows. DNA-dependent RNA polymerase catalyzes the transcription of DNA into RNA using the four ribonucleoside triphosphates as substrates. The polypeptide is DNA-directed RNA polymerase subunit beta' (Paramagnetospirillum magneticum (strain ATCC 700264 / AMB-1) (Magnetospirillum magneticum)).